A 394-amino-acid chain; its full sequence is Xylose isomerase (394 aa).

Catalysis depends on residues histidine 54 and aspartate 57. Residues glutamate 181, glutamate 217, histidine 220, aspartate 245, aspartate 255, aspartate 257, and aspartate 292 each contribute to the Mg(2+) site.

The protein belongs to the xylose isomerase family. Homotetramer. It depends on Mg(2+) as a cofactor.

It is found in the cytoplasm. The catalysed reaction is alpha-D-xylose = alpha-D-xylulofuranose. This Actinoplanes missouriensis (strain ATCC 14538 / DSM 43046 / CBS 188.64 / JCM 3121 / NBRC 102363 / NCIMB 12654 / NRRL B-3342 / UNCC 431) protein is Xylose isomerase (xylA).